A 377-amino-acid polypeptide reads, in one-letter code: Palmitoyltransferase ZDHHC16 (377 aa).

Topologically, residues 1 to 77 (MRGQRSLLLG…VYWLVDNVIR (77 aa)) are cytoplasmic. The chain crosses the membrane as a helical span at residues 78–98 (WFGVVFVVLVIVLTGSIVAIA). The Lumenal portion of the chain corresponds to 99 to 116 (YLCVLPLILRTYSVPRLC). A helical membrane pass occupies residues 117–137 (WHFFYSHWNLILIVFHYYQAI). Residues 138–198 (TTPPGYPPQG…NNCVGHYNHR (61 aa)) are Cytoplasmic-facing. One can recognise a DHHC domain in the interval 155–205 (SICKKCIYPKPARTHHCSICNRCVLKMDHHCPWLNNCVGHYNHRYFFSFCF). The active-site S-palmitoyl cysteine intermediate is cysteine 185. The helical transmembrane segment at 199-219 (YFFSFCFFMTLGCVYCSYGSW) threads the bilayer. At 220–266 (DLFREAYAAIEKMKQLDKNKLQAVANQTYHQTPPPIFSFRERMTHKS) the chain is on the lumenal side. A helical transmembrane segment spans residues 267–287 (LVYLWFLCSSVALALGALTVW). Over 288-377 (HAVLISRGET…TAHSASVMAV (90 aa)) the chain is Cytoplasmic.

The protein belongs to the DHHC palmitoyltransferase family. As to quaternary structure, interacts with ABL1. Interacts with COPS5/JAB1.

It localises to the endoplasmic reticulum membrane. The catalysed reaction is L-cysteinyl-[protein] + hexadecanoyl-CoA = S-hexadecanoyl-L-cysteinyl-[protein] + CoA. Its function is as follows. Palmitoyl acyltransferase that mediates palmitoylation of proteins such as PLN and ZDHHC6. Required during embryonic heart development and cardiac function, possibly by mediating palmitoylation of PLN, thereby affecting PLN phosphorylation and homooligomerization. Also required for eye development. Palmitoylates ZDHHC6, affecting the quaternary assembly of ZDHHC6, its localization, stability and function. May play a role in DNA damage response. May be involved in apoptosis regulation. Involved in the proliferation of neural stem cells by regulating the FGF/ERK pathway. The protein is Palmitoyltransferase ZDHHC16 of Macaca fascicularis (Crab-eating macaque).